Reading from the N-terminus, the 177-residue chain is Large ribosomal subunit protein uL6 (177 aa).

This sequence belongs to the universal ribosomal protein uL6 family. Part of the 50S ribosomal subunit.

Functionally, this protein binds to the 23S rRNA, and is important in its secondary structure. It is located near the subunit interface in the base of the L7/L12 stalk, and near the tRNA binding site of the peptidyltransferase center. In Klebsiella pneumoniae subsp. pneumoniae (strain ATCC 700721 / MGH 78578), this protein is Large ribosomal subunit protein uL6.